Reading from the N-terminus, the 320-residue chain is Glucokinase (320 aa).

12-17 (GDIGGT) lines the ATP pocket.

It belongs to the bacterial glucokinase family.

Its subcellular location is the cytoplasm. It catalyses the reaction D-glucose + ATP = D-glucose 6-phosphate + ADP + H(+). This Nitrobacter hamburgensis (strain DSM 10229 / NCIMB 13809 / X14) protein is Glucokinase.